Consider the following 396-residue polypeptide: Elongation factor Tu (396 aa).

Positions 11–205 (KPHVNIGTIG…TIDEYIPTPV (195 aa)) constitute a tr-type G domain. The segment at 20 to 27 (GHVDHGKT) is G1. Position 20–27 (20–27 (GHVDHGKT)) interacts with GTP. Thr27 lines the Mg(2+) pocket. The segment at 61-65 (GITIN) is G2. The tract at residues 82–85 (DAPG) is G3. GTP-binding positions include 82–86 (DAPGH) and 137–140 (NKTD). The tract at residues 137 to 140 (NKTD) is G4. Residues 175 to 177 (SAL) form a G5 region.

It belongs to the TRAFAC class translation factor GTPase superfamily. Classic translation factor GTPase family. EF-Tu/EF-1A subfamily. In terms of assembly, monomer.

It localises to the cytoplasm. The catalysed reaction is GTP + H2O = GDP + phosphate + H(+). In terms of biological role, GTP hydrolase that promotes the GTP-dependent binding of aminoacyl-tRNA to the A-site of ribosomes during protein biosynthesis. In Lacticaseibacillus casei (strain BL23) (Lactobacillus casei), this protein is Elongation factor Tu.